The primary structure comprises 143 residues: MESTLGSDLARLVRVWRALIDHRLKPLELTQTHWVTLHNINRLPPEQSQIQLAKAIGIEQPSLVRTLDQLEEKGLITRHTCANDRRAKRIKLTEQSSPIIEQVDGVICSTRKEILGGISPDEIELLSGLIDKLERNIIQLQSK.

Residues 2–135 (ESTLGSDLAR…LSGLIDKLER (134 aa)) form the HTH marR-type domain. The H-T-H motif DNA-binding region spans 49 to 72 (QIQLAKAIGIEQPSLVRTLDQLEE).

Belongs to the SlyA family. Homodimer.

Its function is as follows. Transcription regulator that can specifically activate or repress expression of target genes. This chain is Transcriptional regulator SlyA, found in Yersinia enterocolitica serotype O:8 / biotype 1B (strain NCTC 13174 / 8081).